The primary structure comprises 356 residues: Kinetochore-associated protein DSN1 homolog (356 aa).

A disordered region spans residues 1–28; the sequence is MTSVTRSEIIDEKGPVMSKTHDHQLESS. Positions 8–25 are enriched in basic and acidic residues; the sequence is EIIDEKGPVMSKTHDHQL. Phosphoserine occurs at positions 28, 30, 58, 77, 81, 109, and 125. The segment at 73 to 93 is disordered; sequence LQSKSLHLSPQEQSASYQDRR. A compositionally biased stretch (polar residues) spans 75 to 89; it reads SKSLHLSPQEQSASY. A Glycyl lysine isopeptide (Lys-Gly) (interchain with G-Cter in SUMO2) cross-link involves residue K253. S331 carries the post-translational modification Phosphoserine.

As to quaternary structure, component of the MIS12 complex composed of MIS12, DSN1, NSL1 and PMF1. Also interacts with KNL1, CBX3 and CBX5. Interacts with KNSTRN.

It localises to the nucleus. It is found in the chromosome. The protein resides in the centromere. Its subcellular location is the kinetochore. Its function is as follows. Part of the MIS12 complex which is required for normal chromosome alignment and segregation and kinetochore formation during mitosis. The polypeptide is Kinetochore-associated protein DSN1 homolog (DSN1) (Homo sapiens (Human)).